We begin with the raw amino-acid sequence, 122 residues long: MARIAGVDLPREKRVEVGLTYIYGIGRPKANEILVKTGVNPDTRVRDLTDDEVNKIREIIDKEYKVEGDLRREIALNIKRLTEIGCYRGRRHRMGLPVRGQRTKTNARTRKGPSKPVSGKKK.

The interval 92 to 122 is disordered; sequence HRMGLPVRGQRTKTNARTRKGPSKPVSGKKK. Residues 101–122 are compositionally biased toward basic residues; that stretch reads QRTKTNARTRKGPSKPVSGKKK.

It belongs to the universal ribosomal protein uS13 family. In terms of assembly, part of the 30S ribosomal subunit. Forms a loose heterodimer with protein S19. Forms two bridges to the 50S subunit in the 70S ribosome.

In terms of biological role, located at the top of the head of the 30S subunit, it contacts several helices of the 16S rRNA. In the 70S ribosome it contacts the 23S rRNA (bridge B1a) and protein L5 of the 50S subunit (bridge B1b), connecting the 2 subunits; these bridges are implicated in subunit movement. Contacts the tRNAs in the A and P-sites. The sequence is that of Small ribosomal subunit protein uS13 from Ruminiclostridium cellulolyticum (strain ATCC 35319 / DSM 5812 / JCM 6584 / H10) (Clostridium cellulolyticum).